The following is a 36-amino-acid chain: U14-ctenitoxin-Co1b (36 aa).

Expressed by the venom gland.

Its subcellular location is the secreted. Its function is as follows. Not toxic to mice by intracerebroventricular injection. This Ctenus ornatus (Brazilian spider) protein is U14-ctenitoxin-Co1b.